Here is a 281-residue protein sequence, read N- to C-terminus: 3-methyl-2-oxobutanoate hydroxymethyltransferase (281 aa).

Mg(2+) is bound by residues Asp-49 and Asp-88. Residues 49–50, Asp-88, and Lys-118 contribute to the 3-methyl-2-oxobutanoate site; that span reads DS. Glu-120 serves as a coordination point for Mg(2+). Glu-186 acts as the Proton acceptor in catalysis.

The protein belongs to the PanB family. As to quaternary structure, homodecamer; pentamer of dimers. It depends on Mg(2+) as a cofactor.

It is found in the cytoplasm. It carries out the reaction 3-methyl-2-oxobutanoate + (6R)-5,10-methylene-5,6,7,8-tetrahydrofolate + H2O = 2-dehydropantoate + (6S)-5,6,7,8-tetrahydrofolate. It functions in the pathway cofactor biosynthesis; (R)-pantothenate biosynthesis; (R)-pantoate from 3-methyl-2-oxobutanoate: step 1/2. In terms of biological role, catalyzes the reversible reaction in which hydroxymethyl group from 5,10-methylenetetrahydrofolate is transferred onto alpha-ketoisovalerate to form ketopantoate. This is 3-methyl-2-oxobutanoate hydroxymethyltransferase from Chelativorans sp. (strain BNC1).